A 214-amino-acid polypeptide reads, in one-letter code: uncharacterized protein (214 aa).

A run of 5 helical transmembrane segments spans residues 33-53 (VILFVSLVFILSLVLLYILVV), 104-124 (ILGIFSLFVIAVNSYILSYVL), 132-152 (FIYLVLPHGIIEIPALILSAS), 153-173 (GGVLFNMGLVNFLINIKFGTK), and 186-206 (LLILSIILFIVAGIVEGTITF).

The protein resides in the cell membrane. This is an uncharacterized protein from Methanocaldococcus jannaschii (strain ATCC 43067 / DSM 2661 / JAL-1 / JCM 10045 / NBRC 100440) (Methanococcus jannaschii).